The primary structure comprises 88 residues: Guanine nucleotide-binding protein subunit gamma (88 aa).

A lipid anchor (S-palmitoyl cysteine) is attached at Cys-84. Cys-85 carries the cysteine methyl ester modification. Cys-85 carries S-farnesyl cysteine lipidation. Positions Thr-86–Met-88 are cleaved as a propeptide — removed in mature form.

This sequence belongs to the G protein gamma family. As to quaternary structure, g proteins are composed of 3 units, alpha, beta and gamma.

It localises to the membrane. The protein is Guanine nucleotide-binding protein subunit gamma of Candida glabrata (strain ATCC 2001 / BCRC 20586 / JCM 3761 / NBRC 0622 / NRRL Y-65 / CBS 138) (Yeast).